The primary structure comprises 190 residues: Segregation and condensation protein B (190 aa).

This sequence belongs to the ScpB family. Homodimer. Homodimerization may be required to stabilize the binding of ScpA to the Smc head domains. Component of a cohesin-like complex composed of ScpA, ScpB and the Smc homodimer, in which ScpA and ScpB bind to the head domain of Smc. The presence of the three proteins is required for the association of the complex with DNA.

The protein localises to the cytoplasm. Functionally, participates in chromosomal partition during cell division. May act via the formation of a condensin-like complex containing Smc and ScpA that pull DNA away from mid-cell into both cell halves. This is Segregation and condensation protein B from Bacillus cereus (strain G9842).